The chain runs to 240 residues: Ribosomal RNA small subunit methyltransferase G (240 aa).

S-adenosyl-L-methionine contacts are provided by residues glycine 78, phenylalanine 83, 129-130 (AE), and arginine 147. The tract at residues 218–240 (RRQTSKKYPRKPGTPNKSPLLEN) is disordered.

Belongs to the methyltransferase superfamily. RNA methyltransferase RsmG family.

The protein localises to the cytoplasm. Its function is as follows. Specifically methylates the N7 position of guanine in position 535 of 16S rRNA. In Staphylococcus haemolyticus (strain JCSC1435), this protein is Ribosomal RNA small subunit methyltransferase G.